Consider the following 196-residue polypeptide: MSDTSSLDALIQALRRLPGVGVKSAQRMAFHLLQHDRAGAQVLSQALAQAATQVRHCERCHTFTEGAVCETCLDPARDATRLCVVETPADQAAMERTAAFKGLYFVLMGRLSPLDGVGPRDIGVHNLLERASDGVVQEVILATSFTAEGEATAHAIGEALKRRGVHVTRLARGVPVGSELEYVDLGTIAHALADRR.

A C4-type zinc finger spans residues 57–72; that stretch reads CERCHTFTEGAVCETC. Positions 80–175 constitute a Toprim domain; that stretch reads TRLCVVETPA…HVTRLARGVP (96 aa).

The protein belongs to the RecR family.

Its function is as follows. May play a role in DNA repair. It seems to be involved in an RecBC-independent recombinational process of DNA repair. It may act with RecF and RecO. This is Recombination protein RecR from Acidovorax sp. (strain JS42).